Consider the following 314-residue polypeptide: Probable cell division protein WhiA (314 aa).

A DNA-binding region (H-T-H motif) is located at residues 274 to 308; it reads SLKELGEMVSTGPISKSGVNHRLRKLNDLADKIRN.

This sequence belongs to the WhiA family.

Functionally, involved in cell division and chromosome segregation. In Staphylococcus aureus (strain USA300), this protein is Probable cell division protein WhiA.